The primary structure comprises 341 residues: MSSVIRYDWTAEELHALFDLSLPELLYRAASVHRQHFDPAEIQVSTLLSVKTGGCPEDCSYCPQAQRYDTGVTAQKLMDVDAVVAKARQAKLAGASRFCMGAAWRSPKDRDIPKIASMIREVKALGLETCATLGMLNTCQAQALKDAGLDYYNHNVDTSPDFYDSVIHTRQYQDRLDTLAHVRDVGLKTCCGGIVGMGETRQHRVGLLLTLATLPAHPDSVPVNLLVQVAGTPLHGTQTLDPFEFVRMIAVARITMPRSMVRLSAGRESMSDELQLLCFMAGANSIFYGEKLLTTANPETERDQALFQRLGLRPMHLMENVSNQDQHHGNVHADIACKHVV.

Residues 40–267 (AEIQVSTLLS…RSMVRLSAGR (228 aa)) enclose the Radical SAM core domain. Residues cysteine 55, cysteine 59, and cysteine 62 each coordinate [4Fe-4S] cluster. Residues cysteine 99, cysteine 130, cysteine 190, and arginine 262 each coordinate [2Fe-2S] cluster.

Belongs to the radical SAM superfamily. Biotin synthase family. Homodimer. [4Fe-4S] cluster serves as cofactor. [2Fe-2S] cluster is required as a cofactor.

The catalysed reaction is (4R,5S)-dethiobiotin + (sulfur carrier)-SH + 2 reduced [2Fe-2S]-[ferredoxin] + 2 S-adenosyl-L-methionine = (sulfur carrier)-H + biotin + 2 5'-deoxyadenosine + 2 L-methionine + 2 oxidized [2Fe-2S]-[ferredoxin]. It functions in the pathway cofactor biosynthesis; biotin biosynthesis; biotin from 7,8-diaminononanoate: step 2/2. Its function is as follows. Catalyzes the conversion of dethiobiotin (DTB) to biotin by the insertion of a sulfur atom into dethiobiotin via a radical-based mechanism. The sequence is that of Biotin synthase from Xylella fastidiosa (strain M12).